We begin with the raw amino-acid sequence, 377 residues long: N5-carboxyaminoimidazole ribonucleotide synthase (377 aa).

ATP-binding positions include R93, K133, 138–144 (GYDGKGQ), 175–178 (EEFV), E183, H206, and 257–258 (NE). One can recognise an ATP-grasp domain in the interval 97-287 (KALLDNAGVR…QFENHLRAVC (191 aa)).

It belongs to the PurK/PurT family. As to quaternary structure, homodimer.

The catalysed reaction is 5-amino-1-(5-phospho-beta-D-ribosyl)imidazole + hydrogencarbonate + ATP = 5-carboxyamino-1-(5-phospho-D-ribosyl)imidazole + ADP + phosphate + 2 H(+). Its pathway is purine metabolism; IMP biosynthesis via de novo pathway; 5-amino-1-(5-phospho-D-ribosyl)imidazole-4-carboxylate from 5-amino-1-(5-phospho-D-ribosyl)imidazole (N5-CAIR route): step 1/2. In terms of biological role, catalyzes the ATP-dependent conversion of 5-aminoimidazole ribonucleotide (AIR) and HCO(3)(-) to N5-carboxyaminoimidazole ribonucleotide (N5-CAIR). This Vibrio parahaemolyticus serotype O3:K6 (strain RIMD 2210633) protein is N5-carboxyaminoimidazole ribonucleotide synthase.